Consider the following 436-residue polypeptide: Cytochrome b5-related protein (436 aa).

One can recognise a Cytochrome b5 heme-binding domain in the interval 16-100 (PTYRNSALIT…IAKYKVRDAA (85 aa)). The heme site is built by H59 and H82.

In terms of tissue distribution, muscle.

Its function is as follows. May play a role in muscle cell metabolism. This Drosophila melanogaster (Fruit fly) protein is Cytochrome b5-related protein (Cyt-b5-r).